The primary structure comprises 306 residues: MKDKHIAVLMGGFSSERSISLSSGAACADVLEEQGYRVSRVDVGAHIASVLEQLQPDIAFNALHGPFGEDGRIQGILEYLKIPYTHSGVMASALAMDKGRAKIIAANAGVCVAPSRIMNRFSIGKTHPMEPPYVIKPVCEGSSFGVVIVQENEAVPPHNIGGSEWGYADEVMVEKYIPGRELTCAVLGNEVLDVCEILPDQHFAFYDYDSKYKTGGSLHICPAKLSLNIYQSVQRMSLAAHQAIGCRGVSRSDFRFDEKTGELVWLEINTQPGMTSTSLLPDIAKASGRTYGDIVQWMVEDASCMR.

The ATP-grasp domain maps to 102-300; sequence KIIAANAGVC…YGDIVQWMVE (199 aa). Position 128–183 (128–183) interacts with ATP; that stretch reads PMEPPYVIKPVCEGSSFGVVIVQENEAVPPHNIGGSEWGYADEVMVEKYIPGRELT. The Mg(2+) site is built by D253, E267, and N269.

This sequence belongs to the D-alanine--D-alanine ligase family. Mg(2+) is required as a cofactor. Requires Mn(2+) as cofactor.

The protein localises to the cytoplasm. It carries out the reaction 2 D-alanine + ATP = D-alanyl-D-alanine + ADP + phosphate + H(+). The protein operates within cell wall biogenesis; peptidoglycan biosynthesis. Functionally, cell wall formation. The protein is D-alanine--D-alanine ligase of Bartonella tribocorum (strain CIP 105476 / IBS 506).